Here is a 134-residue protein sequence, read N- to C-terminus: DNA-directed RNA polymerase subunit omega (134 aa).

A disordered region spans residues 76 to 102; sequence EVDEPEPDPASMIAAGGAAAADSEEQD.

The protein belongs to the RNA polymerase subunit omega family. As to quaternary structure, the RNAP catalytic core consists of 2 alpha, 1 beta, 1 beta' and 1 omega subunit. When a sigma factor is associated with the core the holoenzyme is formed, which can initiate transcription.

The enzyme catalyses RNA(n) + a ribonucleoside 5'-triphosphate = RNA(n+1) + diphosphate. Functionally, promotes RNA polymerase assembly. Latches the N- and C-terminal regions of the beta' subunit thereby facilitating its interaction with the beta and alpha subunits. The chain is DNA-directed RNA polymerase subunit omega from Rhizobium etli (strain ATCC 51251 / DSM 11541 / JCM 21823 / NBRC 15573 / CFN 42).